The sequence spans 457 residues: Cysteine desulfurase (457 aa).

Pyridoxal 5'-phosphate is bound by residues alanine 127, threonine 128, glutamine 235, serine 255, and histidine 257. An N6-(pyridoxal phosphate)lysine modification is found at lysine 258. A pyridoxal 5'-phosphate-binding site is contributed by threonine 295. Cysteine 381 acts as the Cysteine persulfide intermediate in catalysis. Cysteine 381 is a binding site for [2Fe-2S] cluster. Residue cysteine 381 participates in Zn(2+) binding. Cysteine 381 is subject to Cysteine persulfide.

It belongs to the class-V pyridoxal-phosphate-dependent aminotransferase family. NifS/IscS subfamily. Homodimer. Component of the mitochondrial core iron-sulfur cluster (ISC) complex composed of NFS1, LYRM4, NDUFAB1, ISCU, FXN, and FDX2; this complex is a heterohexamer containing two copies of each monomer. Component of cyteine desulfurase complex composed of NFS1, LYRM4 and NDUFAB1; this complex contributes to the activation of cysteine desulfurase activity and NFS1 stabilization. Interacts (homodimer form) with ISCU (D-state); each monomer interacts with the C-terminal regions of each NFS1 monomer. Interacts with HSPA9. Interacts (via homodimer form) with FDX2. Interacts (via homodimer form) with FXN. Interacts with LYRM4. Component of a complex composed of FXN, NFS1, LYRM4 and ISCU. In terms of assembly, monomer. Homodimer. Oligomer. Interacts with ISCU. Component of the cysteine desulfurase complex composed of NFS1 and LYRM4; this complex contributes to the activation of cysteine desulfurase activity. Interacts with MOCS3. The cofactor is pyridoxal 5'-phosphate. Post-translationally, N-gluconoylated. Cysteine persulfide intermediate is reduced by thiol-containing molecules like glutathione and L-cysteine. Persulfide reduction is a rate-limiting step of cysteine desulfurase catalytic cycle. In terms of tissue distribution, predominantly expressed in heart and skeletal muscle. Also found in brain, liver and pancreas.

The protein localises to the mitochondrion. The protein resides in the cytoplasm. Its subcellular location is the nucleus. It is found in the cytoskeleton. It localises to the microtubule organizing center. The protein localises to the centrosome. It catalyses the reaction (sulfur carrier)-H + L-cysteine = (sulfur carrier)-SH + L-alanine. The enzyme catalyses L-cysteinyl-[cysteine desulfurase] + L-cysteine = S-sulfanyl-L-cysteinyl-[cysteine desulfurase] + L-alanine. Its activity is regulated as follows. Active only in complex with LYRM4. Functionally, cysteine desulfurase, of the core iron-sulfur cluster (ISC) assembly complex, that catalyzes the desulfuration of L-cysteine to L-alanine, as component of the cysteine desulfurase complex, leading to the formation of a cysteine persulfide intermediate at the active site cysteine residue and participates in the [2Fe-2S] clusters assembly on the scaffolding protein ISCU. The persulfide is then transferred on the flexible Cys loop from the catalytic site of NFS1 to the surface of NFS1. After the NFS1-linked persulfide sulfur is transferred to one of the conserved Cys residues of the scaffold, a reaction assisted by FXN. The core iron-sulfur cluster (ISC) assembly complex is involved in the de novo synthesis of a [2Fe-2S] cluster, the first step of the mitochondrial iron-sulfur protein biogenesis. This process is initiated by the cysteine desulfurase complex (NFS1:LYRM4:NDUFAB1) that produces persulfide which is delivered on the scaffold protein ISCU in a FXN-dependent manner. Then this complex is stabilized by FDX2 which provides reducing equivalents to accomplish the [2Fe-2S] cluster assembly. Finally, the [2Fe-2S] cluster is transferred from ISCU to chaperone proteins, including HSCB, HSPA9 and GLRX5. In terms of biological role, may catalyze the desulfuration of L-cysteine to L-alanine as component of the cysteine desulfurase complex (NFS1:LYRM4), leading to the formation of a cysteine persulfide intermediate. Acts as a sulfur donor for MOCS3 by transferring the sulfur of the cysteine persulfide intermediate on MOCS3. The sequence is that of Cysteine desulfurase from Homo sapiens (Human).